The following is a 181-amino-acid chain: uncharacterized protein (181 aa).

Residues 1–14 (MQKCIMRSTEFKTH) are Cytoplasmic-facing. The helical transmembrane segment at 15–35 (FSFHSIFSFPLSAALLALISA) threads the bilayer. The Extracellular portion of the chain corresponds to 36-58 (SEPASKAFINVQFISSPLVKKEV). Residues 59 to 79 (LPFIVSFHSLSSNGILSFSPF) traverse the membrane as a helical segment. Topologically, residues 80–84 (TSSNL) are cytoplasmic. Residues 85-105 (SIAQLPFLIKVPLLSMGSLAL) form a helical membrane-spanning segment. Residues 106 to 116 (ENFNKFIPRAD) lie on the Extracellular side of the membrane. The helical transmembrane segment at 117–137 (LVAAWVTIIMVFTFGNFLSTL) threads the bilayer. At 138 to 153 (SIKTGQNLWHLSKISS) the chain is on the cytoplasmic side. Residues 154-174 (SVSPLLLGIILGSQSGEIMLG) traverse the membrane as a helical segment. Residues 175-181 (KNLLITS) lie on the Extracellular side of the membrane.

The protein localises to the membrane. This is an uncharacterized protein from Saccharomyces cerevisiae (strain ATCC 204508 / S288c) (Baker's yeast).